We begin with the raw amino-acid sequence, 896 residues long: Valine--tRNA ligase (896 aa).

Positions 48–58 (PNVTGSLHMGH) match the 'HIGH' region motif. Residues 543–547 (KMSKS) carry the 'KMSKS' region motif. Residue K546 participates in ATP binding. Residues 830–896 (VIDLDAERTR…ARLGAALERL (67 aa)) adopt a coiled-coil conformation.

This sequence belongs to the class-I aminoacyl-tRNA synthetase family. ValS type 1 subfamily. Monomer.

Its subcellular location is the cytoplasm. The catalysed reaction is tRNA(Val) + L-valine + ATP = L-valyl-tRNA(Val) + AMP + diphosphate. In terms of biological role, catalyzes the attachment of valine to tRNA(Val). As ValRS can inadvertently accommodate and process structurally similar amino acids such as threonine, to avoid such errors, it has a 'posttransfer' editing activity that hydrolyzes mischarged Thr-tRNA(Val) in a tRNA-dependent manner. The protein is Valine--tRNA ligase of Granulibacter bethesdensis (strain ATCC BAA-1260 / CGDNIH1).